We begin with the raw amino-acid sequence, 223 residues long: Serum amyloid P-component (223 aa).

An N-terminal signal peptide occupies residues 1-19; that stretch reads MNKPLLWISVLTSLLEAFA. The Pentraxin (PTX) domain maps to 24 to 223; sequence SGKVFVFPRE…YVIIKPLVWV (200 aa). A glycan (N-linked (GlcNAc...) asparagine) is linked at Asn51. Cys55 and Cys114 are oxidised to a cystine. Ca(2+) contacts are provided by Asp77, Asn78, Glu155, Gln156, Asp157, and Gln167.

It belongs to the pentraxin family. Homopentamer. Pentraxin (or pentaxin) have a discoid arrangement of 5 non-covalently bound subunits. Ca(2+) is required as a cofactor. N-glycosylated with a complex biantennary oligosaccharide chain with a sialic acid at the end (disialo-SAP). Monosialo-SAP as well as asioalo-SAP are also detected. As to expression, found in serum and urine.

The protein localises to the secreted. Can interact with DNA and histones and may scavenge nuclear material released from damaged circulating cells. May also function as a calcium-dependent lectin. This is Serum amyloid P-component (APCS) from Homo sapiens (Human).